The primary structure comprises 974 residues: Probable proton ATPase 1A (974 aa).

Residues Met-1–Ala-23 are compositionally biased toward basic and acidic residues. Residues Met-1–Gly-61 form a disordered region. At Met-1–Arg-92 the chain is on the cytoplasmic side. The chain crosses the membrane as a helical span at residues Gly-93–Leu-112. Residues Glu-113 to Asp-117 lie on the Extracellular side of the membrane. The chain crosses the membrane as a helical span at residues Gly-118–Ile-137. Residues Lys-138–Arg-264 lie on the Cytoplasmic side of the membrane. Residues Val-265–Ala-286 traverse the membrane as a helical segment. At Arg-287 to His-294 the chain is on the extracellular side. A helical transmembrane segment spans residues Ala-295 to Val-321. The Cytoplasmic portion of the chain corresponds to Gly-322 to Arg-630. The active-site 4-aspartylphosphate intermediate is Asp-351. Mg(2+) is bound by residues Asp-605 and Asp-609. A helical transmembrane segment spans residues Ala-631–Val-651. The Extracellular segment spans residues Ser-652 to Ser-661. The chain crosses the membrane as a helical span at residues Phe-662–Leu-684. Topologically, residues Thr-685–Gln-697 are cytoplasmic. A helical transmembrane segment spans residues Phe-698–Leu-712. Residues Asn-713–Pro-737 lie on the Extracellular side of the membrane. A Mg(2+)-binding site is contributed by Asp-714. Residues Val-738–Gly-761 traverse the membrane as a helical segment. The Cytoplasmic portion of the chain corresponds to Leu-762 to His-812. The helical transmembrane segment at Phe-813–Phe-840 threads the bilayer. Over Trp-841–Trp-868 the chain is Extracellular. A helical transmembrane segment spans residues Val-869 to Ala-887. Residues His-888 to Lys-974 lie on the Cytoplasmic side of the membrane. Residues Gly-950–Ile-959 are compositionally biased toward basic and acidic residues. The disordered stretch occupies residues Gly-950–Lys-974.

The protein belongs to the cation transport ATPase (P-type) (TC 3.A.3) family. Type IIIA subfamily.

Its subcellular location is the membrane. It catalyses the reaction ATP + H2O + H(+)(in) = ADP + phosphate + 2 H(+)(out). The protein is Probable proton ATPase 1A (H1A) of Leishmania donovani.